The following is a 191-amino-acid chain: Protein 2 in picA locus (191 aa).

The protein belongs to the acyltransferase 3 family.

The protein resides in the cell membrane. In terms of biological role, seems to regulate the surface properties of the bacterium in the presence of plant cells or plant cell extracts. This Rhizobium radiobacter (Agrobacterium tumefaciens) protein is Protein 2 in picA locus.